The chain runs to 90 residues: Cell division topological specificity factor (90 aa).

Belongs to the MinE family.

Its function is as follows. Prevents the cell division inhibition by proteins MinC and MinD at internal division sites while permitting inhibition at polar sites. This ensures cell division at the proper site by restricting the formation of a division septum at the midpoint of the long axis of the cell. In Bordetella avium (strain 197N), this protein is Cell division topological specificity factor.